Consider the following 937-residue polypeptide: FNIP repeat-containing protein DDB_G0271996 (937 aa).

A compositionally biased stretch (polar residues) spans 1 to 12 (MQQPISIQQPVV). The segment at 1–60 (MQQPISIQQPVVNNINNSPNNQANINNNTTNNTNNNNNNNNTTNNIANNNNSNNINNNNE) is disordered. Positions 13–60 (NNINNSPNNQANINNNTTNNTNNNNNNNNTTNNIANNNNSNNINNNNE) are enriched in low complexity. FNIP repeat units follow at residues 307 to 350 (FNQP…LGQR), 354 to 394 (PIPI…TLDN), 396 to 439 (FNQP…FHQN), and 598 to 640 (YNHQ…RVKS). The stretch at 677–769 (VEQQAQYAQQ…EEEDTNNHQH (93 aa)) forms a coiled coil. Low complexity predominate over residues 719-729 (KQQQQQQQDNE). Disordered stretches follow at residues 719–767 (KQQQ…TNNH), 794–823 (SNNSNNYNYNNNSNNNNNNNSNEEDDEEED), and 910–937 (QNQNNNNYNNNNNNNNNNNNNKKKNVKK). The span at 751–763 (LEEEQENEEEEED) shows a compositional bias: acidic residues. Low complexity-rich tracts occupy residues 794–814 (SNNSNNYNYNNNSNNNNNNNS) and 910–929 (QNQNNNNYNNNNNNNNNNNN). A coiled-coil region spans residues 902–937 (ICNNINQNQNQNNNNYNNNNNNNNNNNNNKKKNVKK).

This is FNIP repeat-containing protein DDB_G0271996 from Dictyostelium discoideum (Social amoeba).